Here is a 174-residue protein sequence, read N- to C-terminus: MSSGNQTFLIGKVSATHGVRGQLRITSFSGDMDSFMALRSVMIKKPGGGMETLAVAEAKAHGKKIILSLKGYTDINDVLHLVGREIYVLRDQLPLLSDGEYYWCDLLGLQVMTEDGDILGELVDIISTGSNDVYVVHGGGDKEILIPALDDVVLDVDTVAGRMTVSLPEGLLDL.

The 75-residue stretch at 97-171 (SDGEYYWCDL…RMTVSLPEGL (75 aa)) folds into the PRC barrel domain.

The protein belongs to the RimM family. In terms of assembly, binds ribosomal protein uS19.

The protein localises to the cytoplasm. Its function is as follows. An accessory protein needed during the final step in the assembly of 30S ribosomal subunit, possibly for assembly of the head region. Essential for efficient processing of 16S rRNA. May be needed both before and after RbfA during the maturation of 16S rRNA. It has affinity for free ribosomal 30S subunits but not for 70S ribosomes. This chain is Ribosome maturation factor RimM, found in Geotalea daltonii (strain DSM 22248 / JCM 15807 / FRC-32) (Geobacter daltonii).